Consider the following 81-residue polypeptide: RSRSRSRRSSRSRSRSISKSRSRSRSRSKGRSRSRSKGRKSRSKSKSKPKSDRGSRSRSRSRSKDEYEKSRSRSRSRSRSP.

Over residues 1–48 the composition is skewed to basic residues; sequence RSRSRSRRSSRSRSRSISKSRSRSRSRSKGRSRSRSKGRKSRSKSKSK. Positions 1–81 are disordered; sequence RSRSRSRRSS…SRSRSRSRSP (81 aa). A compositionally biased stretch (basic and acidic residues) spans 62–71; sequence RSKDEYEKSR. Over residues 72–81 the composition is skewed to basic residues; the sequence is SRSRSRSRSP.

It belongs to the splicing factor SR family. Binds SREK1/SFRS12. Interacts with DYRK1A. Post-translationally, extensively phosphorylated on serine residues in the RS domain. Phosphorylated by DYRK1A, probably in the RS domain. Phosphorylation by DYRK1A modulates alternative splice site selection and inhibits the expression of MAPT/Tau exon 10.

Its subcellular location is the nucleus. The protein localises to the nucleus speckle. In terms of biological role, plays a role in constitutive splicing and modulates the selection of alternative splice sites. Plays a role in the alternative splicing of MAPT/Tau exon 10. Binds to alternative exons of TNC pre-mRNA and promotes the expression of alternatively spliced TNC. Plays a role in wound healing and in the regulation of keratinocyte differentiation and proliferation via its role in alternative splicing. This chain is Serine/arginine-rich splicing factor 6 (SRSF6), found in Oryctolagus cuniculus (Rabbit).